The chain runs to 467 residues: Glutamate--tRNA ligase (467 aa).

Positions 10 to 20 (PSPTGHLHIGG) match the 'HIGH' region motif. 4 residues coordinate Zn(2+): Cys99, Cys101, Cys126, and Glu128. Positions 236–240 (RLSKR) match the 'KMSKS' region motif. Lys239 is a binding site for ATP.

Belongs to the class-I aminoacyl-tRNA synthetase family. Glutamate--tRNA ligase type 1 subfamily. As to quaternary structure, monomer. Zn(2+) serves as cofactor.

The protein localises to the cytoplasm. It carries out the reaction tRNA(Glu) + L-glutamate + ATP = L-glutamyl-tRNA(Glu) + AMP + diphosphate. Its function is as follows. Catalyzes the attachment of glutamate to tRNA(Glu) in a two-step reaction: glutamate is first activated by ATP to form Glu-AMP and then transferred to the acceptor end of tRNA(Glu). This is Glutamate--tRNA ligase from Desulfosudis oleivorans (strain DSM 6200 / JCM 39069 / Hxd3) (Desulfococcus oleovorans).